Consider the following 475-residue polypeptide: 23S rRNA (uracil(1939)-C(5))-methyltransferase RlmD (475 aa).

The segment covering 1 to 10 has biased composition (basic residues); sequence MAMLGKRRPP. The disordered stretch occupies residues 1-33; that stretch reads MAMLGKRRPPRTANERVRRERGSATRRDDATAD. The segment covering 13 to 30 has biased composition (basic and acidic residues); it reads ANERVRRERGSATRRDDA. The TRAM domain maps to 26 to 85; it reads RRDDATADGLSIERLAHDGRGVARDPHGKTVFVDQALPGERVRVAVHRQRKRFDEAHVVE. [4Fe-4S] cluster contacts are provided by C98, C104, C107, and C183. S-adenosyl-L-methionine-binding residues include Q294, F323, N328, E344, D371, and D388. The active-site Nucleophile is C414. Positions 455–475 are disordered; that stretch reads TRDTPRGRSTSVEREDHGQGP. Residues 457 to 475 show a composition bias toward basic and acidic residues; the sequence is DTPRGRSTSVEREDHGQGP.

It belongs to the class I-like SAM-binding methyltransferase superfamily. RNA M5U methyltransferase family. RlmD subfamily.

The enzyme catalyses uridine(1939) in 23S rRNA + S-adenosyl-L-methionine = 5-methyluridine(1939) in 23S rRNA + S-adenosyl-L-homocysteine + H(+). Its function is as follows. Catalyzes the formation of 5-methyl-uridine at position 1939 (m5U1939) in 23S rRNA. The chain is 23S rRNA (uracil(1939)-C(5))-methyltransferase RlmD from Chromohalobacter salexigens (strain ATCC BAA-138 / DSM 3043 / CIP 106854 / NCIMB 13768 / 1H11).